Reading from the N-terminus, the 106-residue chain is Large ribosomal subunit protein uL24 (106 aa).

Belongs to the universal ribosomal protein uL24 family. As to quaternary structure, part of the 50S ribosomal subunit.

One of two assembly initiator proteins, it binds directly to the 5'-end of the 23S rRNA, where it nucleates assembly of the 50S subunit. Its function is as follows. One of the proteins that surrounds the polypeptide exit tunnel on the outside of the subunit. This chain is Large ribosomal subunit protein uL24, found in Blochmanniella floridana.